We begin with the raw amino-acid sequence, 137 residues long: Glutamate mutase sigma subunit (137 aa).

Positions 3–137 (EVNLVLGVIG…KALKEDLGLM (135 aa)) constitute a B12-binding domain. Residues 13–17 (ADVHA), H16, 61–63 (SSL), and 93–97 (NLVVG) contribute to the adenosylcob(III)alamin site.

Belongs to the methylaspartate mutase GlmS subunit family. As to quaternary structure, heterotetramer composed of 2 epsilon subunits (GlmE) and 2 sigma subunits (GlmS). GlmE exists as a homodimer and GlmS as a monomer. It depends on adenosylcob(III)alamin as a cofactor.

The catalysed reaction is (2S,3S)-3-methyl-L-aspartate = L-glutamate. It participates in amino-acid degradation; L-glutamate degradation via mesaconate pathway; acetate and pyruvate from L-glutamate: step 1/4. In terms of biological role, catalyzes the carbon skeleton rearrangement of L-glutamate to L-threo-3-methylaspartate ((2S,3S)-3-methylaspartate). This Carboxydothermus hydrogenoformans (strain ATCC BAA-161 / DSM 6008 / Z-2901) protein is Glutamate mutase sigma subunit.